The chain runs to 113 residues: T cell receptor alpha variable 8-4 (113 aa).

Residues 1 to 20 (MLLLLVPVLEVIFTLGGTRA) form the signal peptide. Positions 21–113 (QSVTQLGSHV…DAAEYFCAVS (93 aa)) constitute an Ig-like domain. A disulfide bond links Cys42 and Cys110. A glycan (N-linked (GlcNAc...) asparagine) is linked at Asn43.

Alpha-beta TR is a heterodimer composed of an alpha and beta chain; disulfide-linked. The alpha-beta TR is associated with the transmembrane signaling CD3 coreceptor proteins to form the TR-CD3 (TcR or TCR). The assembly of alpha-beta TR heterodimers with CD3 occurs in the endoplasmic reticulum where a single alpha-beta TR heterodimer associates with one CD3D-CD3E heterodimer, one CD3G-CD3E heterodimer and one CD247 homodimer forming a stable octameric structure. CD3D-CD3E and CD3G-CD3E heterodimers preferentially associate with TR alpha and TR beta chains, respectively. The association of the CD247 homodimer is the last step of TcR assembly in the endoplasmic reticulum and is required for transport to the cell surface.

The protein localises to the cell membrane. V region of the variable domain of T cell receptor (TR) alpha chain that participates in the antigen recognition. Alpha-beta T cell receptors are antigen specific receptors which are essential to the immune response and are present on the cell surface of T lymphocytes. Recognize peptide-major histocompatibility (MH) (pMH) complexes that are displayed by antigen presenting cells (APC), a prerequisite for efficient T cell adaptive immunity against pathogens. Binding of alpha-beta TR to pMH complex initiates TR-CD3 clustering on the cell surface and intracellular activation of LCK that phosphorylates the ITAM motifs of CD3G, CD3D, CD3E and CD247 enabling the recruitment of ZAP70. In turn ZAP70 phosphorylates LAT, which recruits numerous signaling molecules to form the LAT signalosome. The LAT signalosome propagates signal branching to three major signaling pathways, the calcium, the mitogen-activated protein kinase (MAPK) kinase and the nuclear factor-kappa-B (NF-kB) pathways, leading to the mobilization of transcription factors that are critical for gene expression and essential for T cell growth and differentiation. The T cell repertoire is generated in the thymus, by V-(D)-J rearrangement. This repertoire is then shaped by intrathymic selection events to generate a peripheral T cell pool of self-MH restricted, non-autoaggressive T cells. Post-thymic interaction of alpha-beta TR with the pMH complexes shapes TR structural and functional avidity. This chain is T cell receptor alpha variable 8-4, found in Homo sapiens (Human).